A 291-amino-acid chain; its full sequence is Nucleotide-binding protein LGAS_1315 (291 aa).

Position 13–20 (13–20 (GMSGAGKT)) interacts with ATP. 63-66 (DLRV) provides a ligand contact to GTP.

It belongs to the RapZ-like family.

In terms of biological role, displays ATPase and GTPase activities. The sequence is that of Nucleotide-binding protein LGAS_1315 from Lactobacillus gasseri (strain ATCC 33323 / DSM 20243 / BCRC 14619 / CIP 102991 / JCM 1131 / KCTC 3163 / NCIMB 11718 / NCTC 13722 / AM63).